A 632-amino-acid chain; its full sequence is tRNA-guanine(15) transglycosylase (632 aa).

Asp86 serves as the catalytic Nucleophile. Residues Asp121 and Gly186 each coordinate substrate. Positions Asn553 to Asp628 constitute a PUA domain.

This sequence belongs to the archaeosine tRNA-ribosyltransferase family. Zn(2+) is required as a cofactor.

It catalyses the reaction guanosine(15) in tRNA + 7-cyano-7-deazaguanine = 7-cyano-7-carbaguanosine(15) in tRNA + guanine. It functions in the pathway tRNA modification; archaeosine-tRNA biosynthesis. Exchanges the guanine residue with 7-cyano-7-deazaguanine (preQ0) at position 15 in the dihydrouridine loop (D-loop) of archaeal tRNAs. The chain is tRNA-guanine(15) transglycosylase from Thermoplasma volcanium (strain ATCC 51530 / DSM 4299 / JCM 9571 / NBRC 15438 / GSS1).